Reading from the N-terminus, the 341-residue chain is Transcription factor JunD (341 aa).

The tract at residues Val-21 to Met-49 is disordered. A Menin-binding motif (MBM) motif is present at residues Pro-35–Ser-47. The short motif at Lys-51 to Ala-60 is the MAP kinase docking motif; essential for its phosphorylation element. Positions Ala-65–Asp-85 are disordered. Phosphoserine is present on Ser-90. Ser-100 is subject to Phosphoserine; by MAPK8. At Thr-117 the chain carries Phosphothreonine. Residues Ala-155–Pro-176 form a disordered region. Phosphoserine occurs at positions 245, 249, and 253. Residues Arg-262 to Arg-289 are basic motif. Residues Arg-262–His-325 form the bZIP domain. The tract at residues Leu-290–Leu-318 is leucine-zipper.

The protein belongs to the bZIP family. Jun subfamily. Heterodimer; binds DNA as a heterodimer. Component of an AP-1 transcription factor complex composed of JUN-FOS heterodimers. As part of the AP-1 transcription factor complex, forms heterodimers with FOS proteins, thereby binding to the AP-1 consensus sequence and stimulating transcription. Forms heterodimers with FOSB; thereby binding to the AP-1 consensus sequence. Interacts (via MBM motif) with MEN1; this interaction represses transcriptional activation. Interacts with MAPK10; this interaction is inhibited in the presence of MEN1. Phosphorylated by MAP kinases MAPK8 and MAPK10; phosphorylation is inhibited in the presence of MEN1.

The protein resides in the nucleus. In terms of biological role, transcription factor binding AP-1 sites. Heterodimerizes with proteins of the FOS family to form an AP-1 transcription factor complex, thereby enhancing their DNA binding activity to an AP-1 consensus sequence 3'-TGA[GC]TCA-5' and enhancing their transcriptional activity. The chain is Transcription factor JunD (Jund) from Rattus norvegicus (Rat).